The chain runs to 264 residues: PDZ domain-containing protein 9 (264 aa).

Residues 22 to 109 (VHNLSKTQQT…GTVLQIKVYR (88 aa)) enclose the PDZ domain.

This chain is PDZ domain-containing protein 9 (PDZD9), found in Macaca fascicularis (Crab-eating macaque).